We begin with the raw amino-acid sequence, 78 residues long: NAD(P)H-quinone oxidoreductase subunit L (78 aa).

2 consecutive transmembrane segments (helical) span residues 10 to 30 (LFVI…IPLG) and 48 to 68 (LLIY…APFL).

It belongs to the complex I NdhL subunit family. As to quaternary structure, NDH-1 can be composed of about 15 different subunits; different subcomplexes with different compositions have been identified which probably have different functions.

It localises to the cellular thylakoid membrane. It catalyses the reaction a plastoquinone + NADH + (n+1) H(+)(in) = a plastoquinol + NAD(+) + n H(+)(out). The catalysed reaction is a plastoquinone + NADPH + (n+1) H(+)(in) = a plastoquinol + NADP(+) + n H(+)(out). Functionally, NDH-1 shuttles electrons from an unknown electron donor, via FMN and iron-sulfur (Fe-S) centers, to quinones in the respiratory and/or the photosynthetic chain. The immediate electron acceptor for the enzyme in this species is believed to be plastoquinone. Couples the redox reaction to proton translocation, and thus conserves the redox energy in a proton gradient. Cyanobacterial NDH-1 also plays a role in inorganic carbon-concentration. This chain is NAD(P)H-quinone oxidoreductase subunit L, found in Prochlorococcus marinus (strain SARG / CCMP1375 / SS120).